A 439-amino-acid chain; its full sequence is Nitroalkane oxidase (439 aa).

FAD-binding positions include 131–134, 139–141, 169–171, R304, 313–314, 375–379, and 400–404; these read LMHS, TAN, WPS, HQ, KAVGM, and LFDGG. D402 serves as the catalytic Proton acceptor.

The protein belongs to the acyl-CoA dehydrogenase family. In terms of assembly, homotetramer. It depends on FAD as a cofactor.

It carries out the reaction a primary nitroalkane + O2 + H2O = an aldehyde + nitrite + H2O2 + H(+). The enzyme catalyses a secondary nitroalkane + O2 + H2O = a ketone + nitrite + H2O2 + H(+). Its activity is regulated as follows. Strongly inhibited by mercury chloride and KCN. Catalyzes the oxidative denitrification of neutral nitroalkanes, including 3-nitro-2-pentanol, 1-nitropropane, 2-nitropropane, nitroethane and nitrocyclohexane, and may thereby protect the organism against toxic compounds. Has no detectable acyl-CoA dehydrogenase activity. The protein is Nitroalkane oxidase of Fusarium oxysporum (Fusarium vascular wilt).